A 364-amino-acid chain; its full sequence is Spermatogenesis-associated protein 22 (364 aa).

Polar residues-rich tracts occupy residues 1 to 13 (MKRN…TRST), 30 to 48 (QPLT…NASD), 73 to 108 (KTVN…SKSD), 137 to 169 (LMTN…LPNQ), and 177 to 189 (QTKS…STMR). 2 disordered regions span residues 1–51 (MKRN…DNYD) and 70–189 (PLTK…STMR).

In terms of assembly, component of a multiprotein complex with MEIOB and RPA2. Interacts with MEIOB. Interacts with the complex BRME1:HSF2BP:BRCA2.

It is found in the chromosome. Its function is as follows. Meiosis-specific protein required for homologous recombination in meiosis I. This is Spermatogenesis-associated protein 22 (SPATA22) from Bos taurus (Bovine).